Here is a 205-residue protein sequence, read N- to C-terminus: MNDNREQLTQQIIDAGRFLYGRGWSPATSSNYSARLDEQRALLTVSGKHKGQLGFDDVLATDLAGNSLEPGKKPSAETLLHTQLYAWNPAIGAVLHTHSVNATVLSRLVRGDRLVLQDYELQKAFAGVTTHEGQVEVPIFDNDQDIARLASRVQPWLEAHPYCPGYLIRGHGLYTWGARMSDALRQVEAFEFLFECELKVLSLSR.

Zn(2+) contacts are provided by H96 and H98.

The protein belongs to the aldolase class II family. MtnB subfamily. Zn(2+) is required as a cofactor.

It carries out the reaction 5-(methylsulfanyl)-D-ribulose 1-phosphate = 5-methylsulfanyl-2,3-dioxopentyl phosphate + H2O. Its pathway is amino-acid biosynthesis; L-methionine biosynthesis via salvage pathway; L-methionine from S-methyl-5-thio-alpha-D-ribose 1-phosphate: step 2/6. Its function is as follows. Catalyzes the dehydration of methylthioribulose-1-phosphate (MTRu-1-P) into 2,3-diketo-5-methylthiopentyl-1-phosphate (DK-MTP-1-P). The protein is Methylthioribulose-1-phosphate dehydratase of Pseudomonas aeruginosa (strain UCBPP-PA14).